Here is a 249-residue protein sequence, read N- to C-terminus: MPFEIVFDGAKDFADLIATASNLIDEAAFKITEEGISMRAMDPSRVVLIDLNLPESIFSKYEVEEEETVGINMDHFKKILKRGKNKDTLILRKGDENFLEITFEGTAKRTFRLPLIEVEELELDLPELPFTAKVVVLGEVLKEAVKDASLVSDALKFIARENEFIMKAEGETNEVEIKLTLEDEGLLDLEVEEETKSAYGISYLADMIKGIGKADEVIIRFGNEMPLQMEYPIRDEGKLIFLLAPRVED.

This sequence belongs to the PCNA family. In terms of assembly, homotrimer. The subunits circularize to form a toroid; DNA passes through its center. Replication factor C (RFC) is required to load the toroid on the DNA.

In terms of biological role, sliding clamp subunit that acts as a moving platform for DNA processing. Responsible for tethering the catalytic subunit of DNA polymerase and other proteins to DNA during high-speed replication. This is DNA polymerase sliding clamp from Thermococcus onnurineus (strain NA1).